The following is a 492-amino-acid chain: Catalase-3 (492 aa).

Active-site residues include His-65 and Asn-138. Tyr-348 provides a ligand contact to heme.

It belongs to the catalase family. As to quaternary structure, homotetramer. Heme is required as a cofactor.

It localises to the peroxisome. The protein resides in the glyoxysome. It catalyses the reaction 2 H2O2 = O2 + 2 H2O. Its function is as follows. Occurs in almost all aerobically respiring organisms and serves to protect cells from the toxic effects of hydrogen peroxide. The polypeptide is Catalase-3 (CAT3) (Glycine max (Soybean)).